Reading from the N-terminus, the 446-residue chain is Tetratricopeptide repeat protein 23 (446 aa).

4 TPR repeats span residues Leu45 to Cys78, Leu137 to Met170, Ser186 to Thr219, and Ala356 to Leu389.

In terms of assembly, associated with the EvC complex composed of EFCAB7, IQCE, EVC2 and EVC.

It is found in the cell projection. The protein resides in the cilium. Its function is as follows. Participates positively in the ciliary Hedgehog (Hh) signaling. In Rattus norvegicus (Rat), this protein is Tetratricopeptide repeat protein 23 (Ttc23).